We begin with the raw amino-acid sequence, 189 residues long: Glycerol-3-phosphate acyltransferase (189 aa).

5 consecutive transmembrane segments (helical) span residues 1 to 21, 51 to 71, 77 to 97, 111 to 131, and 151 to 171; these read MFWLLAILAYLLGSLSFAILL, LAILTLLGDLCKGLLPVLIAS, LQDQAWIGVCAVIGHLFPLYF, MLLGLYPPAALLAVCAWLLTF, and LLAWQEPAALLPMSTLTLLIV.

The protein belongs to the PlsY family. Probably interacts with PlsX.

It is found in the cell inner membrane. It catalyses the reaction an acyl phosphate + sn-glycerol 3-phosphate = a 1-acyl-sn-glycero-3-phosphate + phosphate. Its pathway is lipid metabolism; phospholipid metabolism. In terms of biological role, catalyzes the transfer of an acyl group from acyl-phosphate (acyl-PO(4)) to glycerol-3-phosphate (G3P) to form lysophosphatidic acid (LPA). This enzyme utilizes acyl-phosphate as fatty acyl donor, but not acyl-CoA or acyl-ACP. This chain is Glycerol-3-phosphate acyltransferase, found in Pseudomonas fluorescens (strain Pf0-1).